Here is a 473-residue protein sequence, read N- to C-terminus: Dynein axonemal assembly factor 11 (473 aa).

LRR repeat units lie at residues 22–43 (SLEE…DKWC), 45–66 (DLKI…SKLK), 67–88 (KLEY…EGCE), and 89–110 (WLTK…KTLT). An LRRCT domain is found at 123 to 161 (NPCADFDGYRQFVVVTLQQLKWLDGKEIERSERIQALQN). Residues 153–205 (SERIQALQNYTSVEQQIREQEKAYCLRRAKEKEEAQRKLEEENESEDKKKSST) are a coiled coil. Basic and acidic residues-rich tracts occupy residues 188–202 (QRKL…DKKK) and 273–283 (EKQRKAQDKLS). Disordered regions lie at residues 188-244 (QRKL…TKES), 273-292 (EKQR…AKPP), and 387-473 (VGEM…PPLI). In terms of domain architecture, CS spans 305 to 402 (VNEAKLDFSL…GGQRTPTSVK (98 aa)). Positions 397–408 (TPTSVKTTSTSS) are enriched in low complexity. The span at 417–431 (KQIERLEVDPSKHSC) shows a compositional bias: basic and acidic residues. Positions 456 to 467 (PSEEDPDFEDNP) are enriched in acidic residues.

Belongs to the tilB family. In terms of assembly, interacts (via CS domain) with ZMYND10 (via C-terminus). In terms of tissue distribution, mainly expressed in cells with motile cilia. Expressed in epithelial cells of the trachea, testis and ependymal cells of the cerebral ventricles. In testis, abundant expression in late prophase of meiosis I with a dramatic decrease after the first meiotic division (at protein level).

The protein resides in the cytoplasm. It localises to the cell projection. It is found in the cilium. Its subcellular location is the dynein axonemal particle. The protein localises to the flagellum. Its function is as follows. Involved in dynein arm assembly, is important for expression and transporting outer dynein arm (ODA) proteins from the cytoplasm to the cilia. Acts as a crucial component in the formation and motility of spermatozoal flagella. The sequence is that of Dynein axonemal assembly factor 11 (Dnaaf11) from Mus musculus (Mouse).